The chain runs to 461 residues: MAQVLTQFDTIAAISTPIGEGGISIVRLSGEDAVAIANKLFKGADLTKVPTHTIHYGHIVDPKTKEVVDETMVSVLRAPKTFTREDMVEINCHGGMIVTNDILQLLLANGARMADPGEFTKRAFMNGRIDLTQAESVMDIVRAKTDKSRQVAMTQLAGGLLDKIKTMRQELLDTMAHEEVNIDYPEYDMDDLTSQEMKKKAQEVSKQIEQLLQTAQEGKIIRNGLATAIVGRPNVGKSSLLNYLTQDDKAIVTDIAGTTRDTLEEYVSVKGVPLKLIDTAGIHHTEDKVEKIGVERSKKAIKEADLVLLLLDASQDLTAEDKRLLDLTANKKRIIILNKQDLGTKISQEMIKDITDNPIIVTSILKQKNMDALENAIEKLFFSGIENSQNQILVTNQRQAGLLTKAKQSLEDVISGIDDAMPLDLVQIDLKNAWDTLGEITGESAPDELITQLFSQFCLGK.

(6S)-5-formyl-5,6,7,8-tetrahydrofolate-binding residues include R27, E89, and R128. The 159-residue stretch at 224-382 folds into the TrmE-type G domain; that stretch reads GLATAIVGRP…LENAIEKLFF (159 aa). N234 serves as a coordination point for K(+). GTP is bound by residues 234–239, 253–259, and 278–281; these read NVGKSS, TDIAGTT, and DTAG. S238 contributes to the Mg(2+) binding site. K(+) is bound by residues T253, I255, and T258. Residue T259 participates in Mg(2+) binding. K461 is a (6S)-5-formyl-5,6,7,8-tetrahydrofolate binding site.

It belongs to the TRAFAC class TrmE-Era-EngA-EngB-Septin-like GTPase superfamily. TrmE GTPase family. Homodimer. Heterotetramer of two MnmE and two MnmG subunits. Requires K(+) as cofactor.

The protein localises to the cytoplasm. In terms of biological role, exhibits a very high intrinsic GTPase hydrolysis rate. Involved in the addition of a carboxymethylaminomethyl (cmnm) group at the wobble position (U34) of certain tRNAs, forming tRNA-cmnm(5)s(2)U34. The protein is tRNA modification GTPase MnmE of Lactobacillus gasseri (strain ATCC 33323 / DSM 20243 / BCRC 14619 / CIP 102991 / JCM 1131 / KCTC 3163 / NCIMB 11718 / NCTC 13722 / AM63).